Consider the following 501-residue polypeptide: Maturase K (501 aa).

The protein belongs to the intron maturase 2 family. MatK subfamily.

The protein localises to the plastid. Its subcellular location is the chloroplast. Usually encoded in the trnK tRNA gene intron. Probably assists in splicing its own and other chloroplast group II introns. The polypeptide is Maturase K (Amborella trichopoda).